Reading from the N-terminus, the 373-residue chain is Erythronate-4-phosphate dehydrogenase (373 aa).

Residues Ser-45 and Thr-66 each coordinate substrate. NAD(+)-binding residues include Asp-146 and Thr-175. Arg-208 is a catalytic residue. Asp-232 contacts NAD(+). Glu-237 is an active-site residue. The Proton donor role is filled by His-254. NAD(+) is bound at residue Gly-257. A substrate-binding site is contributed by Tyr-258.

Belongs to the D-isomer specific 2-hydroxyacid dehydrogenase family. PdxB subfamily. As to quaternary structure, homodimer.

Its subcellular location is the cytoplasm. The catalysed reaction is 4-phospho-D-erythronate + NAD(+) = (R)-3-hydroxy-2-oxo-4-phosphooxybutanoate + NADH + H(+). Its pathway is cofactor biosynthesis; pyridoxine 5'-phosphate biosynthesis; pyridoxine 5'-phosphate from D-erythrose 4-phosphate: step 2/5. In terms of biological role, catalyzes the oxidation of erythronate-4-phosphate to 3-hydroxy-2-oxo-4-phosphonooxybutanoate. The sequence is that of Erythronate-4-phosphate dehydrogenase from Serratia proteamaculans (strain 568).